The following is a 510-amino-acid chain: GMP synthase [glutamine-hydrolyzing] (510 aa).

The 191-residue stretch at 5 to 195 folds into the Glutamine amidotransferase type-1 domain; it reads LVLVVDFGGQ…LFNVCNLKGD (191 aa). The Nucleophile role is filled by Cys82. Catalysis depends on residues His169 and Glu171. In terms of domain architecture, GMPS ATP-PPase spans 196-385; sequence WSMSSFAEQQ…LGIPHKLVWR (190 aa). 223–229 is an ATP binding site; the sequence is SGGVDSS.

As to quaternary structure, homodimer.

It carries out the reaction XMP + L-glutamine + ATP + H2O = GMP + L-glutamate + AMP + diphosphate + 2 H(+). The protein operates within purine metabolism; GMP biosynthesis; GMP from XMP (L-Gln route): step 1/1. In terms of biological role, catalyzes the synthesis of GMP from XMP. The polypeptide is GMP synthase [glutamine-hydrolyzing] (Clostridium botulinum (strain ATCC 19397 / Type A)).